Here is a 480-residue protein sequence, read N- to C-terminus: tRNA-2-methylthio-N(6)-dimethylallyladenosine synthase (480 aa).

Residues 29 to 145 (GSFWIQTFGC…LEALLTQVDN (117 aa)) enclose the MTTase N-terminal domain. Residues C38, C74, C108, C180, C184, and C187 each contribute to the [4Fe-4S] cluster site. The 238-residue stretch at 166-403 (RDSTICAWVN…NALVERIALQ (238 aa)) folds into the Radical SAM core domain. In terms of domain architecture, TRAM spans 406–474 (SRYSGKVEQV…AFSLSGTPCE (69 aa)).

This sequence belongs to the methylthiotransferase family. MiaB subfamily. In terms of assembly, monomer. The cofactor is [4Fe-4S] cluster.

It is found in the cytoplasm. It catalyses the reaction N(6)-dimethylallyladenosine(37) in tRNA + (sulfur carrier)-SH + AH2 + 2 S-adenosyl-L-methionine = 2-methylsulfanyl-N(6)-dimethylallyladenosine(37) in tRNA + (sulfur carrier)-H + 5'-deoxyadenosine + L-methionine + A + S-adenosyl-L-homocysteine + 2 H(+). Its function is as follows. Catalyzes the methylthiolation of N6-(dimethylallyl)adenosine (i(6)A), leading to the formation of 2-methylthio-N6-(dimethylallyl)adenosine (ms(2)i(6)A) at position 37 in tRNAs that read codons beginning with uridine. This Prochlorococcus marinus (strain MIT 9313) protein is tRNA-2-methylthio-N(6)-dimethylallyladenosine synthase.